A 948-amino-acid polypeptide reads, in one-letter code: Zinc finger CCCH domain-containing protein 3 (948 aa).

Disordered regions lie at residues 25–108, 121–219, 265–296, and 336–493; these read HGNA…VPQQ, QNVV…RRTV, VDAG…REAS, and NVCK…LKKT. Positions 56-74 are enriched in basic residues; sequence RPSRRGYSSHHGPSWRKKY. Residues 128 to 141 show a composition bias toward low complexity; the sequence is KPPSKSGSASASGA. Over residues 157–166 the composition is skewed to basic and acidic residues; it reads QRPREGEGEP. Residues 372–398 are compositionally biased toward low complexity; it reads SAPSKYKWKASSPSASSSSSFRWQSEA. A compositionally biased stretch (polar residues) spans 405-415; that stretch reads SQLSPVLSRSP. A Phosphoserine modification is found at serine 408. The segment covering 441–452 has biased composition (basic residues); sequence VKSRTKIIRRRS. C3H1-type zinc fingers lie at residues 667 to 695, 699 to 722, 723 to 749, 750 to 777, and 778 to 800; these read EKRK…HDPE, VCTR…HHVS, KEKM…HVYV, SRKA…HTLL, and CPDF…HRTQ. Disordered stretches follow at residues 798-891 and 913-948; these read RTQK…HEAP and ISLQ…KPRL. Residues 834–846 show a composition bias toward polar residues; the sequence is SASQRPTRQTPSS. Composition is skewed to low complexity over residues 847-856 and 864-885; these read AALTAAAVAA and SASP…PPAS. Phosphoserine occurs at positions 918 and 920.

As to quaternary structure, interacts with SMAD1, SMAD3, SMAD4, CPSF2 and CPSF3.

It is found in the nucleus. Required for the export of polyadenylated mRNAs from the nucleus. Enhances ACVR1B-induced SMAD-dependent transcription. Binds to single-stranded DNA but not to double-stranded DNA in vitro. Involved in RNA cleavage. In Homo sapiens (Human), this protein is Zinc finger CCCH domain-containing protein 3 (ZC3H3).